Here is a 148-residue protein sequence, read N- to C-terminus: D-aminoacyl-tRNA deacylase (148 aa).

The Gly-cisPro motif, important for rejection of L-amino acids signature appears at 136–137 (GP).

The protein belongs to the DTD family. Homodimer.

The protein resides in the cytoplasm. It catalyses the reaction glycyl-tRNA(Ala) + H2O = tRNA(Ala) + glycine + H(+). The enzyme catalyses a D-aminoacyl-tRNA + H2O = a tRNA + a D-alpha-amino acid + H(+). An aminoacyl-tRNA editing enzyme that deacylates mischarged D-aminoacyl-tRNAs. Also deacylates mischarged glycyl-tRNA(Ala), protecting cells against glycine mischarging by AlaRS. Acts via tRNA-based rather than protein-based catalysis; rejects L-amino acids rather than detecting D-amino acids in the active site. By recycling D-aminoacyl-tRNA to D-amino acids and free tRNA molecules, this enzyme counteracts the toxicity associated with the formation of D-aminoacyl-tRNA entities in vivo and helps enforce protein L-homochirality. In Kosmotoga olearia (strain ATCC BAA-1733 / DSM 21960 / TBF 19.5.1), this protein is D-aminoacyl-tRNA deacylase.